Reading from the N-terminus, the 1906-residue chain is Myosin light chain kinase, smooth muscle (1906 aa).

2 consecutive Ig-like C2-type domains span residues 28-117 and 156-244; these read PAFT…VELT and PKFA…AELT. Disordered stretches follow at residues 127–157 and 309–453; these read SLPS…SPPK and ETFY…SKVS. Residues 309–321 are compositionally biased toward basic and acidic residues; it reads ETFYTSREAKDGK. Composition is skewed to polar residues over residues 345 to 354 and 384 to 402; these read LQKTSSTITL and PLMT…QVSP. A compositionally biased stretch (basic and acidic residues) spans 403 to 424; sequence RSRETENRAGVRKSVKEEKREP. Ig-like C2-type domains are found at residues 429–517, 521–613, 637–725, and 735–830; these read PQFE…WLLT, PKVE…AQVT, PIFL…ATLT, and PWFI…SSAS. One copy of the IIA-1 repeat lies at 660-676; that stretch reads VSANPCPEIIWLHNGKE. The 4 X repeats, motif IIA stretch occupies residues 660 to 1833; the sequence is VSANPCPEII…EVMWYKDDQP (1174 aa). One copy of the IIB-1 repeat lies at 693–708; sequence SLYIQEVFPEDTGKYT. Residues 693 to 1866 are 5 X repeats, motif IIB; it reads SLYIQEVFPE…VCGDDDAKYT (1174 aa). The stretch at 758–774 is one IIA-2 repeat; sequence IAGDPFPTVHWFKDGQE. The stretch at 791–807 is one IIB-2 repeat; that stretch reads TLILRNVQSRHAGQYEI. Disordered stretches follow at residues 831 to 881 and 947 to 1086; these read RAEM…QEDV and PKTL…APSF. 2 stretches are compositionally biased toward basic and acidic residues: residues 833–850 and 867–881; these read EMLR…RRDG and SSSE…QEDV. An III-1 repeat occupies 970 to 987; the sequence is AKKGTPKTPLPEKVPPPK. The tract at residues 970–1226 is 4 X repeats, motif III; the sequence is AKKGTPKTPL…TPPKAATPPQ (257 aa). Residues 977 to 988 show a composition bias toward pro residues; that stretch reads TPLPEKVPPPKP. Residues 999–1016 form an III-2 repeat; sequence AKKKPPAENGSASTPAPN. The span at 1039–1051 shows a compositional bias: basic and acidic residues; that stretch reads VKKEEKNDRKCEH. Residues 1061–1078 form an III-3 repeat; it reads IGKKAENKPAASKPTPPP. Ig-like C2-type domains follow at residues 1084–1172 and 1225–1313; these read PSFT…CKVL and PQIT…VNLT. One copy of the IIA-3 repeat lies at 1107–1123; that stretch reads ISSDPPASVSWTLDSKA. The IIB-3 repeat unit spans residues 1140 to 1156; sequence SLTIEKVMPEDGGEYKC. The interval 1180–1227 is disordered; sequence KAAKPAEKKTKKPKTTLPPVLSTESSEATVKKKPAPKTPPKAATPPQI. One copy of the III-4 repeat lies at 1209–1226; that stretch reads VKKKPAPKTPPKAATPPQ. Residues 1281–1297 form an IIB-4 repeat; the sequence is KLTISSTKQEHCGCYTL. The segment at 1317–1364 is motif IA; it reads KPDPPAGTPCASDIRSSSLTLSWYGSSYDGGSAVQSYTVEIWNSVDNK. In terms of domain architecture, Fibronectin type-III spans 1321-1414; that stretch reads PAGTPCASDI…ESEVVKVGEK (94 aa). A motif IB region spans residues 1385–1402; it reads REYKFRVRAANVYGISEP. The interval 1414–1433 is disordered; that stretch reads KQEEELKEEEAELSDDEGKE. The segment covering 1415–1432 has biased composition (acidic residues); the sequence is QEEELKEEEAELSDDEGK. Positions 1453-1708 constitute a Protein kinase domain; it reads YNIEERLGSG…CTQCLQHPWL (256 aa). ATP-binding positions include 1459 to 1467 and K1482; that span reads LGSGKFGQV. The active-site Proton acceptor is the D1574. Residues 1700–1763 form a calmodulin-binding region; that stretch reads TQCLQHPWLQ…SGMSGRKASG (64 aa). Positions 1716–1728 are calmodulin autoinhibition (AM13) region; the sequence is EAKKLSKDRMKKY. Residues 1730–1749 are calmodulin recognition (RS20) region; the sequence is ARRKWQKTGHAVRAIGRLSS. The residue at position 1762 (S1762) is a Phosphoserine; by PKG. A Phosphoserine; by MAPK modification is found at S1768. The region spanning 1794 to 1885 is the Ig-like C2-type 9 domain; it reads PYFTKTILDM…ATCTAELLVE (92 aa). The stretch at 1817–1833 is one IIA-4 repeat; it reads IEGYPDPEVMWYKDDQP. Residues 1851–1866 form an IIB-5 repeat; it reads SLTISEVCGDDDAKYT. Residues 1885 to 1906 are disordered; that stretch reads ETMGKEGEGEGEGEEDEEEEEE. The span at 1893-1906 shows a compositional bias: acidic residues; it reads GEGEGEEDEEEEEE.

Belongs to the protein kinase superfamily. CAMK Ser/Thr protein kinase family. In terms of assembly, all isoforms including Telokin bind calmodulin. Requires Mg(2+) as cofactor. Ca(2+) serves as cofactor. The C-terminus is deglutamylated, leading to the formation of Myosin light chain kinase, smooth muscle, deglutamylated form. The C-terminus is variable, with one to five C-terminal glutamyl residues being removed producing five forms differring in their number of C-terminal glutamyl residues. In terms of processing, acetylated. Post-translationally, phosphorylation of telokin by PKG has no significant effect on its myosin binding activity, but promotes translocation to the membrane. In terms of tissue distribution, isoform telokin is expressed in gizzard, heart, lung, intestine, and skeletal muscle although the levels of the expression in the latter were much less than that in the gizzard.

It localises to the cytoplasm. It is found in the cytosol. The protein resides in the membrane. It catalyses the reaction L-seryl-[myosin light chain] + ATP = O-phospho-L-seryl-[myosin light chain] + ADP + H(+). The enzyme catalyses L-threonyl-[myosin light chain] + ATP = O-phospho-L-threonyl-[myosin light chain] + ADP + H(+). Activated by phosphorylation on Tyr-478. Isoforms which lack this tyrosine residue are not regulated in this way. All catalytically active isoforms require binding to calcium and calmodulin for activation. Functionally, phosphorylates a specific serine in the N-terminus of a myosin light chain, which leads to the formation of calmodulin/MLCK signal transduction complexes which allow selective transduction of calcium signals. The sequence is that of Myosin light chain kinase, smooth muscle (Mylk) from Gallus gallus (Chicken).